A 119-amino-acid polypeptide reads, in one-letter code: Ribonuclease P protein component (119 aa).

This sequence belongs to the RnpA family. As to quaternary structure, consists of a catalytic RNA component (M1 or rnpB) and a protein subunit.

It catalyses the reaction Endonucleolytic cleavage of RNA, removing 5'-extranucleotides from tRNA precursor.. Functionally, RNaseP catalyzes the removal of the 5'-leader sequence from pre-tRNA to produce the mature 5'-terminus. It can also cleave other RNA substrates such as 4.5S RNA. The protein component plays an auxiliary but essential role in vivo by binding to the 5'-leader sequence and broadening the substrate specificity of the ribozyme. The sequence is that of Ribonuclease P protein component from Citrobacter koseri (strain ATCC BAA-895 / CDC 4225-83 / SGSC4696).